The chain runs to 510 residues: 2,3-bisphosphoglycerate-independent phosphoglycerate mutase (510 aa).

Residues Asp-14 and Ser-64 each coordinate Mn(2+). The active-site Phosphoserine intermediate is the Ser-64. Substrate contacts are provided by residues His-125, Arg-155 to Asp-156, Arg-187, Arg-193, Arg-259 to Arg-262, and Lys-332. 5 residues coordinate Mn(2+): Asp-399, His-403, Asp-440, His-441, and His-459.

Belongs to the BPG-independent phosphoglycerate mutase family. Monomer. It depends on Mn(2+) as a cofactor.

It carries out the reaction (2R)-2-phosphoglycerate = (2R)-3-phosphoglycerate. The protein operates within carbohydrate degradation; glycolysis; pyruvate from D-glyceraldehyde 3-phosphate: step 3/5. Its function is as follows. Catalyzes the interconversion of 2-phosphoglycerate and 3-phosphoglycerate. The polypeptide is 2,3-bisphosphoglycerate-independent phosphoglycerate mutase (Ectopseudomonas mendocina (strain ymp) (Pseudomonas mendocina)).